Here is a 956-residue protein sequence, read N- to C-terminus: Glycine dehydrogenase (decarboxylating) 2 (956 aa).

Lys-706 bears the N6-(pyridoxal phosphate)lysine mark.

Belongs to the GcvP family. In terms of assembly, the glycine cleavage system is composed of four proteins: P, T, L and H. Pyridoxal 5'-phosphate is required as a cofactor.

The catalysed reaction is N(6)-[(R)-lipoyl]-L-lysyl-[glycine-cleavage complex H protein] + glycine + H(+) = N(6)-[(R)-S(8)-aminomethyldihydrolipoyl]-L-lysyl-[glycine-cleavage complex H protein] + CO2. The glycine cleavage system catalyzes the degradation of glycine. The P protein binds the alpha-amino group of glycine through its pyridoxal phosphate cofactor; CO(2) is released and the remaining methylamine moiety is then transferred to the lipoamide cofactor of the H protein. This is Glycine dehydrogenase (decarboxylating) 2 from Colwellia psychrerythraea (strain 34H / ATCC BAA-681) (Vibrio psychroerythus).